Reading from the N-terminus, the 198-residue chain is FMN-dependent NADH:quinone oxidoreductase (198 aa).

FMN is bound by residues Ser-10 and 16–18 (SIS).

It belongs to the azoreductase type 1 family. In terms of assembly, homodimer. FMN serves as cofactor.

It carries out the reaction 2 a quinone + NADH + H(+) = 2 a 1,4-benzosemiquinone + NAD(+). It catalyses the reaction N,N-dimethyl-1,4-phenylenediamine + anthranilate + 2 NAD(+) = 2-(4-dimethylaminophenyl)diazenylbenzoate + 2 NADH + 2 H(+). In terms of biological role, quinone reductase that provides resistance to thiol-specific stress caused by electrophilic quinones. Its function is as follows. Also exhibits azoreductase activity. Catalyzes the reductive cleavage of the azo bond in aromatic azo compounds to the corresponding amines. The polypeptide is FMN-dependent NADH:quinone oxidoreductase (Mycoplasmopsis pulmonis (strain UAB CTIP) (Mycoplasma pulmonis)).